The following is a 478-amino-acid chain: Puromycin-sensitive aminopeptidase-like protein (478 aa).

Substrate is bound by residues Glu180 and 316–320 (GAMEN). Residue His352 participates in Zn(2+) binding. Glu353 acts as the Proton acceptor in catalysis. Positions 356 and 375 each coordinate Zn(2+).

It belongs to the peptidase M1 family. Zn(2+) serves as cofactor.

Functionally, aminopeptidase with broad substrate specificity to several peptides. In Homo sapiens (Human), this protein is Puromycin-sensitive aminopeptidase-like protein (NPEPPSL1).